Consider the following 236-residue polypeptide: Ribonuclease P protein component 3 (236 aa).

Belongs to the eukaryotic/archaeal RNase P protein component 3 family. As to quaternary structure, consists of a catalytic RNA component and at least 4-5 protein subunits.

It localises to the cytoplasm. It carries out the reaction Endonucleolytic cleavage of RNA, removing 5'-extranucleotides from tRNA precursor.. Its function is as follows. Part of ribonuclease P, a protein complex that generates mature tRNA molecules by cleaving their 5'-ends. In Natronomonas pharaonis (strain ATCC 35678 / DSM 2160 / CIP 103997 / JCM 8858 / NBRC 14720 / NCIMB 2260 / Gabara) (Halobacterium pharaonis), this protein is Ribonuclease P protein component 3.